The following is a 361-amino-acid chain: sn-glycerol-3-phosphate import ATP-binding protein UgpC (361 aa).

One can recognise an ABC transporter domain in the interval 4-235; it reads LSLKGVRKSY…PATVFVAGFI (232 aa). 37-44 is a binding site for ATP; that stretch reads GPSGCGKS.

Belongs to the ABC transporter superfamily. sn-glycerol-3-phosphate importer (TC 3.A.1.1.3) family. In terms of assembly, the complex is composed of two ATP-binding proteins (UgpC), two transmembrane proteins (UgpA and UgpE) and a solute-binding protein (UgpB).

Its subcellular location is the cell inner membrane. It carries out the reaction sn-glycerol 3-phosphate(out) + ATP + H2O = sn-glycerol 3-phosphate(in) + ADP + phosphate + H(+). In terms of biological role, part of the ABC transporter complex UgpBAEC involved in sn-glycerol-3-phosphate (G3P) import. Responsible for energy coupling to the transport system. The sequence is that of sn-glycerol-3-phosphate import ATP-binding protein UgpC from Burkholderia cenocepacia (strain HI2424).